Consider the following 690-residue polypeptide: Glycine--tRNA ligase beta subunit (690 aa).

Belongs to the class-II aminoacyl-tRNA synthetase family. In terms of assembly, tetramer of two alpha and two beta subunits.

The protein localises to the cytoplasm. It catalyses the reaction tRNA(Gly) + glycine + ATP = glycyl-tRNA(Gly) + AMP + diphosphate. This is Glycine--tRNA ligase beta subunit from Buchnera aphidicola subsp. Acyrthosiphon pisum (strain Tuc7).